The primary structure comprises 122 residues: Acidic phospholipase A2 CbIalpha (122 aa).

Disulfide bonds link C26–C115, C28–C44, C43–C95, C49–C122, C50–C88, C57–C81, and C75–C86. Ca(2+) contacts are provided by Y27, G29, and G31. The active site involves H47. D48 serves as a coordination point for Ca(2+). D89 is a catalytic residue.

Belongs to the phospholipase A2 family. Group II subfamily. D49 sub-subfamily. In terms of assembly, heterodimer of an acidic subunit (CbIalpha or CbIbeta) and a basic subunit (CbII). The acidic subunit is non-toxic, and increases the toxicity of the basic subunit. Requires Ca(2+) as cofactor. Expressed by the venom gland.

It localises to the secreted. It catalyses the reaction a 1,2-diacyl-sn-glycero-3-phosphocholine + H2O = a 1-acyl-sn-glycero-3-phosphocholine + a fatty acid + H(+). Functionally, heterodimer: presynaptic neurotoxin. Its function is as follows. Monomer: Snake venom phospholipase A2 (PLA2) is inactive towards micellar phosphatidylcholine but is weakly active towards non-micellar dithiolecithin. PLA2 catalyzes the calcium-dependent hydrolysis of the 2-acyl groups in 3-sn-phosphoglycerides. In Pseudocerastes fieldi (Field's horned viper), this protein is Acidic phospholipase A2 CbIalpha.